Here is an 86-residue protein sequence, read N- to C-terminus: Cell division topological specificity factor (86 aa).

It belongs to the MinE family.

In terms of biological role, prevents the cell division inhibition by proteins MinC and MinD at internal division sites while permitting inhibition at polar sites. This ensures cell division at the proper site by restricting the formation of a division septum at the midpoint of the long axis of the cell. This is Cell division topological specificity factor from Shewanella halifaxensis (strain HAW-EB4).